Reading from the N-terminus, the 366-residue chain is Phospho-N-acetylmuramoyl-pentapeptide-transferase (366 aa).

10 helical membrane-spanning segments follow: residues 27–47 (AALF…IASL), 71–91 (TPTM…LLWA), 93–113 (LSSI…AIGF), 138–158 (FVIA…AGAA), 174–194 (LMLN…VGAG), 205–225 (GLAI…AYLA), 245–265 (LAVI…FNAP), 268–288 (AIFM…TVAV), 297–317 (IIIG…VFWF), and 343–363 (QVVI…LSTL).

This sequence belongs to the glycosyltransferase 4 family. MraY subfamily. Mg(2+) is required as a cofactor.

It localises to the cell inner membrane. The catalysed reaction is UDP-N-acetyl-alpha-D-muramoyl-L-alanyl-gamma-D-glutamyl-meso-2,6-diaminopimeloyl-D-alanyl-D-alanine + di-trans,octa-cis-undecaprenyl phosphate = di-trans,octa-cis-undecaprenyl diphospho-N-acetyl-alpha-D-muramoyl-L-alanyl-D-glutamyl-meso-2,6-diaminopimeloyl-D-alanyl-D-alanine + UMP. It functions in the pathway cell wall biogenesis; peptidoglycan biosynthesis. Catalyzes the initial step of the lipid cycle reactions in the biosynthesis of the cell wall peptidoglycan: transfers peptidoglycan precursor phospho-MurNAc-pentapeptide from UDP-MurNAc-pentapeptide onto the lipid carrier undecaprenyl phosphate, yielding undecaprenyl-pyrophosphoryl-MurNAc-pentapeptide, known as lipid I. In Rhizobium meliloti (strain 1021) (Ensifer meliloti), this protein is Phospho-N-acetylmuramoyl-pentapeptide-transferase.